A 389-amino-acid chain; its full sequence is Putative 8-amino-7-oxononanoate synthase (389 aa).

Arg-22 contributes to the substrate binding site. 109–110 contributes to the pyridoxal 5'-phosphate binding site; the sequence is GY. Position 134 (His-134) interacts with substrate. Residues Ser-182, 207 to 210, and 238 to 241 each bind pyridoxal 5'-phosphate; these read DDAH and TLSK. Lys-241 is modified (N6-(pyridoxal phosphate)lysine). Thr-350 contacts substrate.

The protein belongs to the class-II pyridoxal-phosphate-dependent aminotransferase family. BioF subfamily. Homodimer. Requires pyridoxal 5'-phosphate as cofactor.

The catalysed reaction is 6-carboxyhexanoyl-[ACP] + L-alanine + H(+) = (8S)-8-amino-7-oxononanoate + holo-[ACP] + CO2. The protein operates within cofactor biosynthesis; biotin biosynthesis. Functionally, catalyzes the decarboxylative condensation of pimeloyl-[acyl-carrier protein] and L-alanine to produce 8-amino-7-oxononanoate (AON), [acyl-carrier protein], and carbon dioxide. The sequence is that of Putative 8-amino-7-oxononanoate synthase (bioF) from Parvibaculum lavamentivorans (strain DS-1 / DSM 13023 / NCIMB 13966).